A 630-amino-acid chain; its full sequence is Pro-interleukin-16 (630 aa).

Disordered stretches follow at residues 30-268 and 316-343; these read ENPG…FPLT and PKEGASPTSSSNEDSAANGSAETSASDT. The span at 129-143 shows a compositional bias: low complexity; it reads IRASSSSSIKQRISS. The residue at position 220 (Ser220) is a Phosphoserine. Polar residues predominate over residues 321 to 343; sequence SPTSSSNEDSAANGSAETSASDT. An interaction with PPP1R12A, PPP1R12B and PPP1R12C region spans residues 404-500; the sequence is KQLDSIHVTI…IVTRKLTAES (97 aa). 2 PDZ domains span residues 410–495 and 532–617; these read HVTI…VTRK and TVTL…IRRK.

Homotetramer. Pro-interleukin-16 interacts (via PDZ 2 domain) with PPP1R12A, PPP1R12B and PPP1R12C. Pro-interleukin-16 interacts with GRIN2A. Pro-interleukin-16 interacts with GABPB1. Pro-interleukin-16 interacts (via PDZ 3 domain) with HDAC3.

The protein localises to the secreted. Its subcellular location is the cytoplasm. The protein resides in the nucleus. Interleukin-16 stimulates a migratory response in CD4+ lymphocytes, monocytes, and eosinophils. Primes CD4+ T-cells for IL-2 and IL-15 responsiveness. Also induces T-lymphocyte expression of interleukin 2 receptor. Ligand for CD4. Its function is as follows. Pro-interleukin-16 is involved in cell cycle progression in T-cells. Appears to be involved in transcriptional regulation of SKP2 and is probably part of a transcriptional repression complex on the core promoter of the SKP2 gene. May act as a scaffold for GABPB1 (the DNA-binding subunit the GABP transcription factor complex) and HDAC3 thus maintaining transcriptional repression and blocking cell cycle progression in resting T-cells. The polypeptide is Pro-interleukin-16 (IL16) (Macaca mulatta (Rhesus macaque)).